The following is a 201-amino-acid chain: tRNA (guanine-N(7)-)-methyltransferase (201 aa).

Residues glutamate 33, glutamate 58, aspartate 85, and aspartate 106 each contribute to the S-adenosyl-L-methionine site. Aspartate 106 is an active-site residue. Substrate is bound by residues lysine 110, aspartate 142, and 180-183 (TTYE).

Belongs to the class I-like SAM-binding methyltransferase superfamily. TrmB family.

The enzyme catalyses guanosine(46) in tRNA + S-adenosyl-L-methionine = N(7)-methylguanosine(46) in tRNA + S-adenosyl-L-homocysteine. It participates in tRNA modification; N(7)-methylguanine-tRNA biosynthesis. In terms of biological role, catalyzes the formation of N(7)-methylguanine at position 46 (m7G46) in tRNA. The protein is tRNA (guanine-N(7)-)-methyltransferase of Mesomycoplasma hyopneumoniae (strain J / ATCC 25934 / NCTC 10110) (Mycoplasma hyopneumoniae).